Reading from the N-terminus, the 387-residue chain is Cytochrome b (387 aa).

4 consecutive transmembrane segments (helical) span residues 32-52 (FGSL…TLAM), 76-98 (WLVR…LHIG), 113-133 (VWAI…LGYV), and 179-199 (FFAL…MHLI). Heme b is bound by residues His-82 and His-96. Heme b is bound by residues His-183 and His-197. His-202 is a binding site for a ubiquinone. 4 helical membrane-spanning segments follow: residues 226-246 (YLFK…SFVF), 290-310 (LLGV…PITD), 322-342 (LSKF…KLGA), and 349-369 (FIEL…IIVP).

Belongs to the cytochrome b family. In terms of assembly, fungal cytochrome b-c1 complex contains 10 subunits; 3 respiratory subunits, 2 core proteins and 5 low-molecular weight proteins. Cytochrome b-c1 complex is a homodimer. It depends on heme b as a cofactor.

It is found in the mitochondrion inner membrane. In terms of biological role, component of the ubiquinol-cytochrome c reductase complex (complex III or cytochrome b-c1 complex) that is part of the mitochondrial respiratory chain. The b-c1 complex mediates electron transfer from ubiquinol to cytochrome c. Contributes to the generation of a proton gradient across the mitochondrial membrane that is then used for ATP synthesis. The protein is Cytochrome b (COB) of Podospora anserina (strain S / ATCC MYA-4624 / DSM 980 / FGSC 10383) (Pleurage anserina).